The following is a 179-amino-acid chain: UPF0398 protein Bsph_0756 (179 aa).

This sequence belongs to the UPF0398 family.

This is UPF0398 protein Bsph_0756 from Lysinibacillus sphaericus (strain C3-41).